The chain runs to 842 residues: Unconventional myosin-Ia (842 aa).

Positions 1 to 686 constitute a Myosin motor domain; that stretch reads GVEDLILLEP…TLFYLEEQRR (686 aa). Position 93-100 (93-100) interacts with ATP; the sequence is GESGAGKT. The tract at residues 563 to 585 is actin-binding; the sequence is VAILMKNLYSKNPNYIRCIKPND. IQ domains are found at residues 689-712, 713-733, and 735-764; these read LQQL…YQQM, RKSQ…KHYG, and IRSS…SGAR.

This sequence belongs to the TRAFAC class myosin-kinesin ATPase superfamily. Myosin family. Post-translationally, phosphorylated by ALPK1.

Its function is as follows. Involved in directing the movement of organelles along actin filaments. The polypeptide is Unconventional myosin-Ia (Myo1a) (Rattus norvegicus (Rat)).